The primary structure comprises 186 residues: Dihydrofolate reductase (186 aa).

A DHFR domain is found at 2–180; sequence RLNVVVAVSE…FTFKFCVYDV (179 aa). NADP(+)-binding positions include Ala-8 and 14–20; that span reads GIGKGGG. 28–33 provides a ligand contact to substrate; it reads DMEFFK. NADP(+) is bound at residue 51–53; sequence RVT. Substrate is bound at residue Arg-67. NADP(+) is bound by residues 73-75 and 112-119; these read SST and GGYRLYKE.

It belongs to the dihydrofolate reductase family. In terms of assembly, monomer.

It carries out the reaction (6S)-5,6,7,8-tetrahydrofolate + NADP(+) = 7,8-dihydrofolate + NADPH + H(+). It participates in cofactor biosynthesis; tetrahydrofolate biosynthesis; 5,6,7,8-tetrahydrofolate from 7,8-dihydrofolate: step 1/1. In terms of biological role, key enzyme in folate metabolism. Contributes to the de novo mitochondrial thymidylate biosynthesis pathway. Catalyzes an essential reaction for de novo glycine and purine synthesis, and for DNA precursor synthesis. This Schistosoma mansoni (Blood fluke) protein is Dihydrofolate reductase.